Here is a 415-residue protein sequence, read N- to C-terminus: MGKIQIEDIIIANQTLKDVVVHTPLQKNQVLSERYECNVYLKREDMQVVRSFKIRGAFHQISSIPKEELNNGVVCASAGNHAQGVAYSCHTLQIPGKIFMPTTTPRQKVDQVKFFGKEYVEVILTGDTFDDSFNEAKEYGIKHKMTFIHPFDQEKIVAGQGTVGMEIMNDIDDNIDYLFCSIGGGGLISGVGTYIKSISPRTKVIGCEPAGAPAMKESLKQGKVIELEKIDKFVDGAAVKKVGEIPFEICQKILEDIVLVPEGKICTTILNLYNQDAIVAEPAGAMPIAALDFFKDEIKGKTVVCVLSGGNNDIGRMQEMRERSLIYEGLQHYFIIQFPQRAGALKEFILDVLGPDDDITRFEYTKKNNKSNGPVLIGIELKCDEDYHRLMDRLNKKGFEYREINKNESLFNLLI.

An N6-(pyridoxal phosphate)lysine modification is found at K53. Pyridoxal 5'-phosphate-binding positions include N80, 183 to 187 (GGGGL), and S308. One can recognise an ACT-like domain in the interval 332-406 (HYFIIQFPQR…KGFEYREINK (75 aa)).

This sequence belongs to the serine/threonine dehydratase family. As to quaternary structure, homotetramer. Requires pyridoxal 5'-phosphate as cofactor.

It carries out the reaction L-threonine = 2-oxobutanoate + NH4(+). Its pathway is amino-acid biosynthesis; L-isoleucine biosynthesis; 2-oxobutanoate from L-threonine: step 1/1. Functionally, catalyzes the anaerobic formation of alpha-ketobutyrate and ammonia from threonine in a two-step reaction. The first step involved a dehydration of threonine and a production of enamine intermediates (aminocrotonate), which tautomerizes to its imine form (iminobutyrate). Both intermediates are unstable and short-lived. The second step is the nonenzymatic hydrolysis of the enamine/imine intermediates to form 2-ketobutyrate and free ammonia. In the low water environment of the cell, the second step is accelerated by RidA. This is L-threonine dehydratase biosynthetic IlvA (ilvA) from Halalkalibacterium halodurans (strain ATCC BAA-125 / DSM 18197 / FERM 7344 / JCM 9153 / C-125) (Bacillus halodurans).